The sequence spans 223 residues: 7-carboxy-7-deazaguanine synthase (223 aa).

Substrate is bound by residues 12–14 and Arg27; that span reads LQG. The 206-residue stretch at 18-223 folds into the Radical SAM core domain; the sequence is FTGVPAIFIR…MQTHKYLNIA (206 aa). Positions 31, 35, and 38 each coordinate [4Fe-4S] cluster. Thr40 serves as a coordination point for Mg(2+). Thr92 contributes to the substrate binding site. S-adenosyl-L-methionine-binding positions include Gly94 and 136-138; that span reads SPK.

This sequence belongs to the radical SAM superfamily. 7-carboxy-7-deazaguanine synthase family. In terms of assembly, homodimer. [4Fe-4S] cluster is required as a cofactor. The cofactor is S-adenosyl-L-methionine. Mg(2+) serves as cofactor.

It carries out the reaction 6-carboxy-5,6,7,8-tetrahydropterin + H(+) = 7-carboxy-7-deazaguanine + NH4(+). It participates in purine metabolism; 7-cyano-7-deazaguanine biosynthesis. Its function is as follows. Catalyzes the complex heterocyclic radical-mediated conversion of 6-carboxy-5,6,7,8-tetrahydropterin (CPH4) to 7-carboxy-7-deazaguanine (CDG), a step common to the biosynthetic pathways of all 7-deazapurine-containing compounds. This chain is 7-carboxy-7-deazaguanine synthase, found in Escherichia coli (strain K12).